The sequence spans 310 residues: HMG box-containing protein C28F2.11 (310 aa).

Residues 69 to 95 (ESPSKKATSPKKATPAAVAPVEATSAV) show a composition bias toward low complexity. A disordered region spans residues 69–310 (ESPSKKATSP…TTPPTAKVAN (242 aa)). The residue at position 70 (Ser-70) is a Phosphoserine. Thr-105 is subject to Phosphothreonine. The HMG box DNA-binding region spans 117–187 (PKRPPSAYNL…AYEEEMAAYN (71 aa)). Basic and acidic residues-rich tracts occupy residues 131–178 (QRSE…LREA) and 200–226 (VTAE…DFSE). Residues Ser-161, Ser-214, and Ser-215 each carry the phosphoserine modification. Thr-217 and Thr-237 each carry phosphothreonine. A compositionally biased stretch (polar residues) spans 255–268 (STVPTSNVEPVSQP). Ser-271, Ser-278, Ser-294, Ser-295, and Ser-297 each carry phosphoserine. Phosphothreonine is present on residues Thr-302 and Thr-305.

The protein localises to the cytoplasm. The sequence is that of HMG box-containing protein C28F2.11 from Schizosaccharomyces pombe (strain 972 / ATCC 24843) (Fission yeast).